We begin with the raw amino-acid sequence, 535 residues long: Alpha-1,3-mannosyl-glycoprotein 4-beta-N-acetylglucosaminyltransferase A (535 aa).

The Cytoplasmic portion of the chain corresponds to 1–4 (MRLR). Residues 5–27 (NGTVATALAFITSFLTLSWYTTW) form a helical; Signal-anchor for type II membrane protein membrane-spanning segment. The stretch at 28–63 (QNGKEKLIAYQREFLALKERLRIAEHRISQRSSELN) forms a coiled coil. Residues 28-535 (QNGKEKLIAY…NEIHIKKATK (508 aa)) lie on the Lumenal side of the membrane. N-linked (GlcNAc...) asparagine glycans are attached at residues N77 and N458. Residue S474 is modified to Phosphoserine.

The protein belongs to the glycosyltransferase 54 family. Requires a divalent metal cation as cofactor. In terms of processing, N-glycosylated.

It localises to the golgi apparatus membrane. The protein localises to the secreted. It carries out the reaction N(4)-{beta-D-GlcNAc-(1-&gt;2)-alpha-D-Man-(1-&gt;3)-[beta-D-GlcNAc-(1-&gt;2)-alpha-D-Man-(1-&gt;6)]-beta-D-Man-(1-&gt;4)-beta-D-GlcNAc-(1-&gt;4)-beta-D-GlcNAc}-L-asparaginyl-[protein] + UDP-N-acetyl-alpha-D-glucosamine = N(4)-{beta-D-GlcNAc-(1-&gt;2)-[beta-D-GlcNAc-(1-&gt;4)]-alpha-D-Man-(1-&gt;3)-[beta-D-GlcNAc-(1-&gt;2)-alpha-D-Man-(1-&gt;6)]-beta-D-Man-(1-&gt;4)-beta-D-GlcNAc-(1-&gt;4)-beta-D-GlcNAc}-L-asparaginyl-[protein] + UDP + H(+). It catalyses the reaction an N(4)-{beta-D-GlcNAc-(1-&gt;2)-alpha-D-Man-(1-&gt;3)-[alpha-D-Man-(1-&gt;6)]-beta-D-Man-(1-&gt;4)-beta-D-GlcNAc-(1-&gt;4)-beta-D-GlcNAc}-L-asparaginyl-[protein] + UDP-N-acetyl-alpha-D-glucosamine = an N(4)-{beta-D-GlcNAc-(1-&gt;2)-[beta-D-GlcNAc-(1-&gt;4)]-alpha-D-Man-(1-&gt;3)-[alpha-D-Man-(1-&gt;6)]-beta-D-Man-(1-&gt;4)-beta-D-GlcNAc-(1-&gt;4)-beta-D-GlcNAc}-L-asparaginyl-[protein] + UDP + H(+). The catalysed reaction is an N(4)-{beta-D-GlcNAc-(1-&gt;2)-alpha-D-Man-(1-&gt;3)-[beta-D-GlcNAc-(1-&gt;2)-[beta-D-GlcNAc-(1-&gt;6)]-alpha-D-Man-(1-&gt;6)]-beta-D-Man-(1-&gt;4)-beta-D-GlcNAc-(1-&gt;4)-beta-D-GlcNAc}-L-asparaginyl-[protein] + UDP-N-acetyl-alpha-D-glucosamine = an N(4)-{beta-D-GlcNAc-(1-&gt;2)-[beta-D-GlcNAc-(1-&gt;4)]-alpha-D-Man-(1-&gt;3)-[beta-D-GlcNAc-(1-&gt;2)-[beta-D-GlcNAc-(1-&gt;6)]-alpha-D-Man-(1-&gt;6)]-beta-D-Man-(1-&gt;4)-beta-D-GlcNAc-(1-&gt;4)-beta-D-GlcNAc}-L-asparaginyl-[protein] + UDP + H(+). The enzyme catalyses an N(4)-{beta-D-GlcNAc-(1-&gt;2)-alpha-D-Man-(1-&gt;3)-[beta-D-GlcNAc-(1-&gt;2)-alpha-D-Man-(1-&gt;6)]-beta-D-Man-(1-&gt;4)-beta-D-GlcNAc-(1-&gt;4)-[alpha-L-Fuc-(1-&gt;6)]-beta-D-GlcNAc}-L-asparaginyl-[protein] + UDP-N-acetyl-alpha-D-glucosamine = N(4)-{beta-D-GlcNAc-(1-&gt;2)-[beta-D-GlcNAc-(1-&gt;4)]-alpha-D-Man-(1-&gt;3)-[beta-D-GlcNAc-(1-&gt;2)-alpha-D-Man-(1-&gt;6)]-beta-D-Man-(1-&gt;4)-beta-D-GlcNAc-(1-&gt;4)-[alpha-L-Fuc-(1-&gt;6)]-beta-D-GlcNAc}-asparaginyl-[protein] + UDP + H(+). It carries out the reaction an N(4)-{beta-D-GlcNAc-(1-&gt;2)-alpha-D-Man-(1-&gt;3)-[beta-D-Gal-(1-&gt;4)-beta-D-GlcNAc-(1-&gt;2)-alpha-D-Man-(1-&gt;6)]-beta-D-Man-(1-&gt;4)-beta-D-GlcNAc-(1-&gt;4)-beta-D-GlcNAc}-L-asparaginyl-[protein] + UDP-N-acetyl-alpha-D-glucosamine = an N(4)-{beta-D-GlcNAc-(1-&gt;2)-[beta-D-GlcNAc-(1-&gt;4)]-alpha-D-Man-(1-&gt;3)-[beta-D-Gal-(1-&gt;4)-beta-D-GlcNAc-(1-&gt;2)-alpha-D-Man-(1-&gt;6)]-beta-D-Man-(1-&gt;4)-beta-D-GlcNAc-(1-&gt;4)-beta-D-GlcNAc}-L-asparaginyl-[protein] + UDP + H(+). It catalyses the reaction N(4)-{beta-D-GlcNAc-(1-&gt;2)-alpha-D-Man-(1-&gt;3)-[alpha-D-Man-(1-&gt;3)-{alpha-D-Man-(1-&gt;6)}-alpha-D-Man-(1-&gt;6)]-beta-D-Man-(1-&gt;4)-beta-D-GlcNAc-(1-&gt;4)-beta-D-GlcNAc}-asparaginyl-[protein] + UDP-N-acetyl-alpha-D-glucosamine = N(4)-{beta-D-GlcNAc-(1-&gt;2)-[beta-D-GlcNAc-(1-&gt;4)]-alpha-D-Man-(1-&gt;3)-[alpha-D-Man-(1-&gt;3)-{alpha-D-Man-(1-&gt;6)}-alpha-D-Man-(1-&gt;6)]-beta-D-Man-(1-&gt;4)-beta-D-GlcNAc-(1-&gt;4)-beta-D-GlcNAc}-asparaginyl-[protein] + UDP + H(+). The catalysed reaction is N(4)-{beta-D-GlcNAc-(1-&gt;2)-alpha-D-Man-(1-&gt;3)-beta-D-Man-(1-&gt;4)-beta-D-GlcNAc-(1-&gt;4)-beta-D-GlcNAc}-asparaginyl-[protein] + UDP-N-acetyl-alpha-D-glucosamine = N(4)-{beta-D-GlcNAc-(1-&gt;2)-[beta-D-GlcNAc-(1-&gt;4)]-alpha-D-Man-(1-&gt;3)-beta-D-Man-(1-&gt;4)-beta-D-GlcNAc-(1-&gt;4)-beta-D-GlcNAc}-asparaginyl-[protein] + UDP + H(+). The protein operates within protein modification; protein glycosylation. Its activity is regulated as follows. Inhibited by UDP. Functionally, glycosyltransferase that catalyze the transfer of GlcNAc from UDP-GlcNAc to the GlcNAcbeta1-2Manalpha1-3 arm of the core structure of N-linked glycans through a beta1-4 linkage and participates in the production of tri- and tetra-antennary N-linked sugar chains. Involved in glucose transport by mediating SLC2A2/GLUT2 glycosylation, thereby controlling cell-surface expression of SLC2A2 in pancreatic beta cells. In Macaca fascicularis (Crab-eating macaque), this protein is Alpha-1,3-mannosyl-glycoprotein 4-beta-N-acetylglucosaminyltransferase A.